Consider the following 196-residue polypeptide: Imidazoleglycerol-phosphate dehydratase (196 aa).

The protein belongs to the imidazoleglycerol-phosphate dehydratase family.

The protein resides in the cytoplasm. It carries out the reaction D-erythro-1-(imidazol-4-yl)glycerol 3-phosphate = 3-(imidazol-4-yl)-2-oxopropyl phosphate + H2O. Its pathway is amino-acid biosynthesis; L-histidine biosynthesis; L-histidine from 5-phospho-alpha-D-ribose 1-diphosphate: step 6/9. The protein is Imidazoleglycerol-phosphate dehydratase of Akkermansia muciniphila (strain ATCC BAA-835 / DSM 22959 / JCM 33894 / BCRC 81048 / CCUG 64013 / CIP 107961 / Muc).